The primary structure comprises 264 residues: Phosphonoacetaldehyde hydrolase (264 aa).

The active-site Nucleophile is Asp9. Residues Asp9 and Ala11 each contribute to the Mg(2+) site. The active-site Schiff-base intermediate with substrate is Lys50. Asp183 contacts Mg(2+).

Belongs to the HAD-like hydrolase superfamily. PhnX family. Homodimer. Mg(2+) is required as a cofactor.

It carries out the reaction phosphonoacetaldehyde + H2O = acetaldehyde + phosphate + H(+). In terms of biological role, involved in phosphonate degradation. This chain is Phosphonoacetaldehyde hydrolase, found in Bacillus mycoides (strain KBAB4) (Bacillus weihenstephanensis).